The sequence spans 125 residues: Cytochrome c-556 (125 aa).

Residues M13, C113, C116, and H117 each contribute to the heme site. Heme c-binding residues include M13, C113, C116, and H117.

In terms of assembly, monomer. Post-translationally, binds 1 heme c group covalently per subunit.

Its function is as follows. Low-spin monoheme cytochrome c. The chain is Cytochrome c-556 from Agrobacterium tumefaciens (strain apple 185).